Here is a 227-residue protein sequence, read N- to C-terminus: Gamma-glutamyl-hercynylcysteine sulfoxide hydrolase (227 aa).

The Nucleophile role is filled by Cys2. Residues 2 to 227 (CRHVAWLGAP…RDAHVVVTPL (226 aa)) form the Glutamine amidotransferase type-2 domain.

It catalyses the reaction gamma-L-glutamyl-hercynylcysteine S-oxide + H2O = S-(hercyn-2-yl)-L-cysteine S-oxide + L-glutamate. It functions in the pathway amino-acid biosynthesis; ergothioneine biosynthesis. In terms of biological role, catalyzes the hydrolysis of the gamma-glutamyl amide bond of hercynyl-gamma-L-glutamyl-L-cysteine sulfoxide to produce hercynylcysteine sulfoxide, a step in the biosynthesis pathway of ergothioneine. The polypeptide is Gamma-glutamyl-hercynylcysteine sulfoxide hydrolase (Mycolicibacterium smegmatis (strain ATCC 700084 / mc(2)155) (Mycobacterium smegmatis)).